The sequence spans 484 residues: Transcription factor MYB88 (484 aa).

The segment at 1–20 (MEETTKQNNMKKKKKILLHS) is disordered. Positions 13-20 (KKKILLHS) match the Nuclear localization signal motif. HTH myb-type domains follow at residues 25 to 76 (KKER…YTYL) and 77 to 131 (NSDF…KKRA). 2 DNA-binding regions (H-T-H motif) span residues 53–76 (WAII…YTYL) and 104–127 (WTEI…TTLC). 3 disordered regions span residues 215-241 (NATS…DKSN), 321-383 (RSSN…GGEL), and 458-484 (GVES…LDSL). Over residues 232 to 241 (KESDGEDKSN) the composition is skewed to basic and acidic residues. Residues 339–348 (SPASSEYSSG) are compositionally biased toward low complexity. Residues 354–380 (TIMTHPSGDKTQQLMSDTQTTSHQQNG) show a composition bias toward polar residues. A compositionally biased stretch (pro residues) spans 463–476 (SPYPSANPSQPPPC).

As to quaternary structure, interacts with RBR1. Expressed at low levels in all organs including roots, leaves, hypocotyls stems, flowers, siliques and buds.

The protein localises to the nucleus. Transcription factor that binds to DNA in promoters cis-regulatory element 5'-GGCGCGC-3' of cell cycle genes, including cyclins, cyclin-dependent kinases (CDKs), and components of the pre-replication complex. Binds to DNA in promoters cis-regulatory element 5'-AGCCG-3' of auxin regulated genes (e.g. PIN3 and PIN7). Together with FAMA and MYB124, ensures that stomata contain just two guard cells (GCs) by enforcing a single symmetric precursor cell division before stomatal maturity. Represses the expression of the mitosis-inducing factors CDKB1-1 and CDKA-1, specifically required for the last guard mother cells (GMC) symmetric divisions in the stomatal pathway. Represses CYCA2-3 in newly formed guard cells. Together with MYB88, regulates stomata spacing by restricting divisions late in the stomatal cell lineage thus limiting the number of GMC divisions. In collaboration with CDKB1-1 and CDKB1-2, restrict the G1/S transition and chloroplast and nuclear number during stomatal formation, and normally maintain fate and developmental progression throughout the stomatal cell lineage. Involved in sensing and/or transducing abiotic stress (e.g. drought and salt), probably via the positive regulation of NAC019. Regulates female reproduction being required for entry into megasporogenesis, probably via the regulation of cell cycle genes. Plays a minor role in lateral roots (LRs) initiation. Involved complementarily in establishing the gravitropic set-point angles of lateral roots by regulating the transcription of PIN3 and PIN7 in gravity-sensing cells of primary and lateral roots. The chain is Transcription factor MYB88 from Arabidopsis thaliana (Mouse-ear cress).